Here is a 136-residue protein sequence, read N- to C-terminus: Large ribosomal subunit protein bL17 (136 aa).

This sequence belongs to the bacterial ribosomal protein bL17 family. Part of the 50S ribosomal subunit. Contacts protein L32.

In Rickettsia prowazekii (strain Madrid E), this protein is Large ribosomal subunit protein bL17.